The following is a 737-amino-acid chain: Death domain-associated protein 6 (737 aa).

The interval 1–55 (MATANSIIVLDDDDEDEAAAQPGPSHPPPNPASPQAEAPGSSQPHGAGGSSSSGG) is disordered. A necessary for interaction with USP7 and ATRX region spans residues 1–159 (MATANSIIVL…TSSEPSGNNP (159 aa)). The residue at position 25 (serine 25) is a Phosphoserine. The span at 33-45 (SPQAEAPGSSQPH) shows a compositional bias: low complexity. Lysine 142 is covalently cross-linked (Glycyl lysine isopeptide (Lys-Gly) (interchain with G-Cter in SUMO2)). Positions 145–184 (LAPAATSSEPSGNNPPTDPSSDPTNAETTASEAPRTRGSR) are disordered. Positions 149–175 (ATSSEPSGNNPPTDPSSDPTNAETTAS) are enriched in polar residues. The stretch at 179 to 216 (RTRGSRRQIQRLEQLLALYVAEIRRLQEKELDLSELDD) forms a coiled coil. The tract at residues 182–417 (GSRRQIQRLE…PLKASLDSGE (236 aa)) is interaction with histone H3.3. Serine 212 carries the post-translational modification Phosphoserine. Positions 346–567 (GIDPALSDPA…SPISQLFELE (222 aa)) are necessary for interaction with USP7. The interval 382 to 556 (QDKSEEGERQ…ENLEELLLEE (175 aa)) is disordered. Positions 390 to 394 (RQKRR) match the Nuclear localization signal motif. Serine 412 and serine 424 each carry phosphoserine. Residues 422 to 432 (MASQECPTTSK) show a composition bias toward polar residues. Residues 432–474 (KPETDDEEDEESEEEEEEEEEEEEEEATDSEEEEDLEQMQEGQ) are a coiled coil. Over residues 435-489 (TDDEEDEESEEEEEEEEEEEEEEATDSEEEEDLEQMQEGQGDDEEEEEEEEEAGQ) the composition is skewed to acidic residues. Phosphothreonine is present on threonine 459. Serine 494 and serine 497 each carry phosphoserine. The residue at position 511 (lysine 511) is an N6-acetyllysine. The span at 517 to 527 (MGEQQNKEFTV) shows a compositional bias: polar residues. Over residues 528 to 547 (SPSSEEPLAPSSIDAESNGE) the composition is skewed to low complexity. Phosphoserine occurs at positions 558 and 578. Residues 569 to 719 (EALPLDTTPS…QPSRPGTYKM (151 aa)) are disordered. A compositionally biased stretch (basic and acidic residues) spans 579–592 (PEERDISSSRKQSE). The interaction with SPOP stretch occupies residues 624–737 (CPPCKKSRKE…EEIIVLSDSD (114 aa)). Residues 626–632 (PCKKSRK) carry the Nuclear localization signal motif. Residues lysine 628 and lysine 629 each participate in a glycyl lysine isopeptide (Lys-Gly) (interchain with G-Cter in SUMO1) cross-link. The segment covering 647–657 (ERQRSVHEKNG) has biased composition (basic and acidic residues). Phosphoserine is present on residues serine 665, serine 668, serine 685, serine 699, serine 734, and serine 736. Positions 678-713 (DSSTRVDSPSHGLVTSSLCSASQARLSQTPHSQPSR) are enriched in polar residues. The segment at 730-737 (IIVLSDSD) is sumo interaction motif (SIM).

It belongs to the DAXX family. Homomultimer. Interacts (via C-terminus) with TNFRSF6 (via death domain). Interacts with PAX5, SLC2A4/GLUT4, MAP3K5, TGFBR2, phosphorylated dimeric HSPB1/HSP27, CENPC, ETS1, sumoylated PML, UBE2I, MCRS1 and TP53. Interacts (via N-terminus) with HIPK2 and HIPK3. Interacts with HIPK1, which induces translocation from PML/POD/ND10 nuclear bodies to chromatin and enhances association with HDAC1. Interacts (non-phosphorylated) with PAX3, PAX7, DEK, HDAC1, HDAC2, HDAC3, acetylated histone H4 and histones H2A, H2B, H3, H3.3 and H4. Interacts with SPOP; mediating CUL3-dependent proteasomal degradation. Interacts with CBP; the interaction is dependent the sumoylation of CBP and suppresses CBP transcriptional activity via recruitment of HDAC2 directly in the complex with TP53 and HIPK2. Interacts with AXIN1; the interaction stimulates the interaction of DAXX with TP53, stimulates 'Ser-46' phosphorylation of TP53 on and induces cell death on UV irradiation. Interacts with MDM2; the interaction is direct. Interacts with USP7; the interaction is direct and independent of MDM2 and TP53. Part of a complex with DAXX, MDM2 and USP7 under non-stress conditions. Interacts (via N-terminus) with RASSF1 (via C-terminus); the interaction is independent of MDM2 and TP53; RASSF1 isoform A disrupts interactions among MDM2, DAXX and USP7, thus contributing to the efficient activation of TP53 by promoting MDM2 self-ubiquitination in cell-cycle checkpoint control in response to DNA damage. Interacts with ATRX to form the chromatin remodeling complex ATRX:DAXX. Interacts with HSF1 (via homotrimeric form preferentially); this interaction relieves homotrimeric HSF1 from repression of its transcriptional activity by HSP90-dependent multichaperone complex upon heat shock. Post-translationally, sumoylated with SUMO1 on multiple lysine residues. Polyubiquitinated; which is promoted by CUL3 and SPOP and results in proteasomal degradation. Ubiquitinated by MDM2; inducing its degradation. Deubiquitinated by USP7; leading to stabilize it.

Its subcellular location is the cytoplasm. The protein localises to the nucleus. It is found in the nucleoplasm. It localises to the PML body. The protein resides in the nucleolus. Its subcellular location is the chromosome. The protein localises to the centromere. In terms of biological role, transcription corepressor known to repress transcriptional potential of several sumoylated transcription factors. Down-regulates basal and activated transcription. Its transcription repressor activity is modulated by recruiting it to subnuclear compartments like the nucleolus or PML/POD/ND10 nuclear bodies through interactions with MCSR1 and PML, respectively. Seems to regulate transcription in PML/POD/ND10 nuclear bodies together with PML and may influence TNFRSF6-dependent apoptosis thereby. Inhibits transcriptional activation of PAX3 and ETS1 through direct protein-protein interactions. Modulates PAX5 activity; the function seems to involve CREBBP. Acts as an adapter protein in a MDM2-DAXX-USP7 complex by regulating the RING-finger E3 ligase MDM2 ubiquitination activity. Under non-stress condition, in association with the deubiquitinating USP7, prevents MDM2 self-ubiquitination and enhances the intrinsic E3 ligase activity of MDM2 towards TP53, thereby promoting TP53 ubiquitination and subsequent proteasomal degradation. Upon DNA damage, its association with MDM2 and USP7 is disrupted, resulting in increased MDM2 autoubiquitination and consequently, MDM2 degradation, which leads to TP53 stabilization. Acts as a histone chaperone that facilitates deposition of histone H3.3. Acts as a targeting component of the chromatin remodeling complex ATRX:DAXX which has ATP-dependent DNA translocase activity and catalyzes the replication-independent deposition of histone H3.3 in pericentric DNA repeats outside S-phase and telomeres, and the in vitro remodeling of H3.3-containing nucleosomes. Does not affect the ATPase activity of ATRX but alleviates its transcription repression activity. Upon neuronal activation associates with regulatory elements of selected immediate early genes where it promotes deposition of histone H3.3 which may be linked to transcriptional induction of these genes. Required for the recruitment of histone H3.3:H4 dimers to PML-nuclear bodies (PML-NBs); the process is independent of ATRX and facilitated by ASF1A; PML-NBs are suggested to function as regulatory sites for the incorporation of newly synthesized histone H3.3 into chromatin. Proposed to mediate activation of the JNK pathway and apoptosis via MAP3K5 in response to signaling from TNFRSF6 and TGFBR2. Interaction with HSPB1/HSP27 may prevent interaction with TNFRSF6 and MAP3K5 and block DAXX-mediated apoptosis. In contrast, in lymphoid cells JNC activation and TNFRSF6-mediated apoptosis may not involve DAXX. Plays a role as a positive regulator of the heat shock transcription factor HSF1 activity during the stress protein response. The sequence is that of Death domain-associated protein 6 (DAXX) from Canis lupus familiaris (Dog).